Here is a 267-residue protein sequence, read N- to C-terminus: tRNA pseudouridine synthase A (267 aa).

Asp-54 functions as the Nucleophile in the catalytic mechanism. Tyr-112 is a binding site for substrate.

Belongs to the tRNA pseudouridine synthase TruA family. As to quaternary structure, homodimer.

The enzyme catalyses uridine(38/39/40) in tRNA = pseudouridine(38/39/40) in tRNA. Its function is as follows. Formation of pseudouridine at positions 38, 39 and 40 in the anticodon stem and loop of transfer RNAs. The chain is tRNA pseudouridine synthase A from Bordetella avium (strain 197N).